A 691-amino-acid chain; its full sequence is Elongation factor G (691 aa).

The tr-type G domain maps to 8 to 282 (NKTRNIGIMA…AVVEFLPAPV (275 aa)). GTP is bound by residues 17-24 (AHIDAGKT), 81-85 (DTPGH), and 135-138 (NKMD).

It belongs to the TRAFAC class translation factor GTPase superfamily. Classic translation factor GTPase family. EF-G/EF-2 subfamily.

The protein localises to the cytoplasm. Its function is as follows. Catalyzes the GTP-dependent ribosomal translocation step during translation elongation. During this step, the ribosome changes from the pre-translocational (PRE) to the post-translocational (POST) state as the newly formed A-site-bound peptidyl-tRNA and P-site-bound deacylated tRNA move to the P and E sites, respectively. Catalyzes the coordinated movement of the two tRNA molecules, the mRNA and conformational changes in the ribosome. The protein is Elongation factor G of Heliobacterium modesticaldum (strain ATCC 51547 / Ice1).